We begin with the raw amino-acid sequence, 66 residues long: Metallothionein (66 aa).

Ser-1 is subject to N-acetylserine. Cd(2+) is bound by residues Cys-9, Cys-13, Cys-18, Cys-20, Cys-24, Cys-26, Cys-30, Cys-32, Cys-35, Cys-38, Cys-40, Cys-45, Cys-47, Cys-51, Cys-57, Cys-59, Cys-63, and Cys-65.

The protein belongs to the metallothionein superfamily. Type 2 family.

The metallothioneins are involved in the cellular sequestration of toxic metal ions and regulation of essential trace elements. The sequence is that of Metallothionein from Arianta arbustorum (Land snail).